The chain runs to 96 residues: (4S)-4-hydroxy-5-phosphonooxypentane-2,3-dione isomerase (96 aa).

Residues 2 to 91 (HVTLVEINVH…MTGPRKKRLF (90 aa)) enclose the ABM domain.

This sequence belongs to the LsrG family. As to quaternary structure, homodimer.

It is found in the cytoplasm. It carries out the reaction (2S)-2-hydroxy-3,4-dioxopentyl phosphate = 3-hydroxy-2,4-dioxopentyl phosphate. Its function is as follows. Involved in the degradation of phospho-AI-2, thereby terminating induction of the lsr operon and closing the AI-2 signaling cycle. Catalyzes the conversion of (4S)-4-hydroxy-5-phosphonooxypentane-2,3-dione (P-DPD) to 3-hydroxy-5-phosphonooxypentane-2,4-dione (P-HPD). The sequence is that of (4S)-4-hydroxy-5-phosphonooxypentane-2,3-dione isomerase from Escherichia coli O157:H7.